A 212-amino-acid polypeptide reads, in one-letter code: Thymidylate kinase (212 aa).

An ATP-binding site is contributed by 10 to 17 (GLEGAGKT).

It belongs to the thymidylate kinase family.

The catalysed reaction is dTMP + ATP = dTDP + ADP. In terms of biological role, phosphorylation of dTMP to form dTDP in both de novo and salvage pathways of dTTP synthesis. The chain is Thymidylate kinase from Photorhabdus laumondii subsp. laumondii (strain DSM 15139 / CIP 105565 / TT01) (Photorhabdus luminescens subsp. laumondii).